The sequence spans 113 residues: MSELDSQVPTAFDPFADANAEDSGAGTKEYVHIRVQQRNGRKSLTTVQGLKKEYSYTKILKDLKKEFCCNGTVVQDSELGQVIQLQGDQRKNVSTFLVQAGLVKKDDIQIHGF.

The interval 1–24 (MSELDSQVPTAFDPFADANAEDSG) is disordered. Residue Ser-2 is modified to N-acetylserine.

Belongs to the SUI1 family.

In terms of biological role, probably involved in translation. The chain is Protein translation factor SUI1 homolog from Brassica oleracea (Wild cabbage).